The following is a 545-amino-acid chain: Chaperonin GroEL (545 aa).

ATP-binding positions include 30-33 (TLGP), Lys-51, 87-91 (DGTTT), Gly-415, and Asp-495.

Belongs to the chaperonin (HSP60) family. In terms of assembly, forms a cylinder of 14 subunits composed of two heptameric rings stacked back-to-back. Interacts with the co-chaperonin GroES.

It is found in the cytoplasm. It carries out the reaction ATP + H2O + a folded polypeptide = ADP + phosphate + an unfolded polypeptide.. Its function is as follows. Together with its co-chaperonin GroES, plays an essential role in assisting protein folding. The GroEL-GroES system forms a nano-cage that allows encapsulation of the non-native substrate proteins and provides a physical environment optimized to promote and accelerate protein folding. This chain is Chaperonin GroEL, found in Yersinia pestis bv. Antiqua (strain Antiqua).